The following is a 259-amino-acid chain: Cytochrome c oxidase subunit 3 (259 aa).

Helical transmembrane passes span 13–33 (PWPLTGSLGAMFLTVGLTSWF), 36–56 (HGFITMLLGLFLVLMTMFQWW), 80–100 (GMVLFITSEICFFFAFFWAYF), 125–145 (FQIPLLNTAILLASGVTVTWA), 154–174 (HAEATQSMVLTVILGGYFTLL), 195–215 (FFVATGFHGLHVIIGSVFLLI), and 237–257 (AWYWHFVDVVWLILYTCIYWW).

This sequence belongs to the cytochrome c oxidase subunit 3 family. In terms of assembly, component of the cytochrome c oxidase (complex IV, CIV), a multisubunit enzyme composed of a catalytic core of 3 subunits and several supernumerary subunits. The complex exists as a monomer or a dimer and forms supercomplexes (SCs) in the inner mitochondrial membrane with ubiquinol-cytochrome c oxidoreductase (cytochrome b-c1 complex, complex III, CIII).

It localises to the mitochondrion inner membrane. It catalyses the reaction 4 Fe(II)-[cytochrome c] + O2 + 8 H(+)(in) = 4 Fe(III)-[cytochrome c] + 2 H2O + 4 H(+)(out). Functionally, component of the cytochrome c oxidase, the last enzyme in the mitochondrial electron transport chain which drives oxidative phosphorylation. The respiratory chain contains 3 multisubunit complexes succinate dehydrogenase (complex II, CII), ubiquinol-cytochrome c oxidoreductase (cytochrome b-c1 complex, complex III, CIII) and cytochrome c oxidase (complex IV, CIV), that cooperate to transfer electrons derived from NADH and succinate to molecular oxygen, creating an electrochemical gradient over the inner membrane that drives transmembrane transport and the ATP synthase. Cytochrome c oxidase is the component of the respiratory chain that catalyzes the reduction of oxygen to water. Electrons originating from reduced cytochrome c in the intermembrane space (IMS) are transferred via the dinuclear copper A center (CU(A)) of subunit 2 and heme A of subunit 1 to the active site in subunit 1, a binuclear center (BNC) formed by heme A3 and copper B (CU(B)). The BNC reduces molecular oxygen to 2 water molecules using 4 electrons from cytochrome c in the IMS and 4 protons from the mitochondrial matrix. The sequence is that of Cytochrome c oxidase subunit 3 (COIII) from Heterololigo bleekeri (Spear squid).